The sequence spans 493 residues: Alcohol-forming fatty acyl-CoA reductase (493 aa).

The protein belongs to the fatty acyl-CoA reductase family.

It carries out the reaction a long-chain fatty acyl-CoA + 2 NADPH + 2 H(+) = a long-chain primary fatty alcohol + 2 NADP(+) + CoA. Its function is as follows. NADPH-dependent alcohol-forming fatty acyl-coenzyme A reductase that catalyzes the reduction of fatty acyl-CoA to fatty alcohols. The recombinant enzyme accepts saturated and mono-unsaturated fatty acyl-CoAs of 16 to 22 carbons. The polypeptide is Alcohol-forming fatty acyl-CoA reductase (Simmondsia chinensis (Jojoba)).